The sequence spans 220 residues: UPF0319 protein YccT (220 aa).

The signal sequence occupies residues M1 to A20.

Belongs to the UPF0319 family.

The chain is UPF0319 protein YccT from Salmonella agona (strain SL483).